The primary structure comprises 440 residues: Light-independent protochlorophyllide reductase subunit N (440 aa).

Residues C15, C40, and C99 each contribute to the [4Fe-4S] cluster site.

It belongs to the BchN/ChlN family. In terms of assembly, protochlorophyllide reductase is composed of three subunits; BchL, BchN and BchB. Forms a heterotetramer of two BchB and two BchN subunits. [4Fe-4S] cluster serves as cofactor.

The catalysed reaction is chlorophyllide a + oxidized 2[4Fe-4S]-[ferredoxin] + 2 ADP + 2 phosphate = protochlorophyllide a + reduced 2[4Fe-4S]-[ferredoxin] + 2 ATP + 2 H2O. The protein operates within porphyrin-containing compound metabolism; bacteriochlorophyll biosynthesis (light-independent). Its function is as follows. Component of the dark-operative protochlorophyllide reductase (DPOR) that uses Mg-ATP and reduced ferredoxin to reduce ring D of protochlorophyllide (Pchlide) to form chlorophyllide a (Chlide). This reaction is light-independent. The NB-protein (BchN-BchB) is the catalytic component of the complex. The polypeptide is Light-independent protochlorophyllide reductase subunit N (Heliobacterium mobile (Heliobacillus mobilis)).